The primary structure comprises 94 residues: Pyrimidine/purine nucleoside phosphorylase 2 (94 aa).

Belongs to the nucleoside phosphorylase PpnP family.

It catalyses the reaction a purine D-ribonucleoside + phosphate = a purine nucleobase + alpha-D-ribose 1-phosphate. The catalysed reaction is adenosine + phosphate = alpha-D-ribose 1-phosphate + adenine. It carries out the reaction cytidine + phosphate = cytosine + alpha-D-ribose 1-phosphate. The enzyme catalyses guanosine + phosphate = alpha-D-ribose 1-phosphate + guanine. It catalyses the reaction inosine + phosphate = alpha-D-ribose 1-phosphate + hypoxanthine. The catalysed reaction is thymidine + phosphate = 2-deoxy-alpha-D-ribose 1-phosphate + thymine. It carries out the reaction uridine + phosphate = alpha-D-ribose 1-phosphate + uracil. The enzyme catalyses xanthosine + phosphate = alpha-D-ribose 1-phosphate + xanthine. Catalyzes the phosphorolysis of diverse nucleosides, yielding D-ribose 1-phosphate and the respective free bases. Can use uridine, adenosine, guanosine, cytidine, thymidine, inosine and xanthosine as substrates. Also catalyzes the reverse reactions. The chain is Pyrimidine/purine nucleoside phosphorylase 2 from Psychrobacter cryohalolentis (strain ATCC BAA-1226 / DSM 17306 / VKM B-2378 / K5).